Consider the following 301-residue polypeptide: rRNA methyltransferase 1, mitochondrial (301 aa).

The transit peptide at 1 to 11 (MIRSRVNLARE) directs the protein to the mitochondrion. The interval 121 to 141 (YNNKNGQDSPHNDLNEGKSSS) is disordered.

Belongs to the class IV-like SAM-binding methyltransferase superfamily. RNA methyltransferase TrmH family.

The protein localises to the mitochondrion. It catalyses the reaction a guanosine in 21S rRNA + S-adenosyl-L-methionine = a 2'-O-methylguanosine in 21S rRNA + S-adenosyl-L-homocysteine + H(+). Functionally, S-adenosyl-L-methionine-dependent 2'-O-ribose methyltransferase that catalyzes the formation of the 2'-O-methylguanosine corresponding to position 2270 in S.cerevisiae 21S mitochondrial large subunit ribosomal RNA (mtLSU rRNA), a universally conserved modification in the peptidyl transferase domain of the mtLSU rRNA. In Schizosaccharomyces pombe (strain 972 / ATCC 24843) (Fission yeast), this protein is rRNA methyltransferase 1, mitochondrial.